A 407-amino-acid chain; its full sequence is uncharacterized protein (407 aa).

The Lumenal portion of the chain corresponds to 1–290; it reads MPLNIIGTAL…SNSLRRVISN (290 aa). Positions 114, 236, and 281 each coordinate NADP(+). The Lowers pKa of active site Tyr role is filled by K236. Residues 291–311 form a helical membrane-spanning segment; it reads GSVVLLIILYCILLYPILWLF. Residues 312-407 are Cytoplasmic-facing; the sequence is TKSGRRGDQS…KSQNKSRKDD (96 aa). Residues 361–390 adopt a coiled-coil conformation; that stretch reads ELQKKLFDNTERDILQLEKKVAAKRNANKT. The segment at 383–407 is disordered; the sequence is AKRNANKTGNQNSKKKSQNKSRKDD. Residues 395–407 are compositionally biased toward basic residues; that stretch reads SKKKSQNKSRKDD.

The protein belongs to the short-chain dehydrogenases/reductases (SDR) family.

The protein resides in the endoplasmic reticulum membrane. May be involved in lipid metabolism. This is an uncharacterized protein from Saccharomyces cerevisiae (strain ATCC 204508 / S288c) (Baker's yeast).